The sequence spans 131 residues: Interleukin-13 (131 aa).

The signal sequence occupies residues 1-18 (MALWVTAVLALACLGGLA). N-linked (GlcNAc...) asparagine glycans are attached at residues Asn42, Asn52, and Asn75. 2 cysteine pairs are disulfide-bonded: Cys51-Cys79 and Cys67-Cys93.

It belongs to the IL-4/IL-13 family. As to quaternary structure, interacts with IL13RA2.

It is found in the secreted. Functionally, cytokine that plays important roles in allergic inflammation and immune response to parasite infection. Synergizes with IL2 in regulating interferon-gamma synthesis. Stimulates B-cell proliferation, and activation of eosinophils, basophils, and mast cells. Plays an important role in controlling IL33 activity by modulating the production of transmembrane and soluble forms of interleukin-1 receptor-like 1/IL1RL1. Displays the capacity to antagonize Th1-driven proinflammatory immune response and downregulates synthesis of many proinflammatory cytokines including IL1, IL6, IL10, IL12 and TNF-alpha through a mechanism that partially involves suppression of NF-kappa-B. Also functions on nonhematopoietic cells, including endothelial cells where it induces vascular cell adhesion protein 1/VCAM1, which is important in the recruitment of eosinophils. Exerts its biological effects through its receptors which comprises the IL4R chain and the IL13RA1 chain, to activate JAK1 and TYK2, leading to the activation of STAT6. Aside from IL13RA1, another receptor IL13RA2 acts as a high affinity decoy for IL13 and mediates internalization and depletion of extracellular IL13. The protein is Interleukin-13 (Il13) of Mus musculus (Mouse).